The chain runs to 660 residues: DNA ligase (660 aa).

Residues 31 to 35, 79 to 80, and Glu111 each bind NAD(+); these read DKEYD and SL. Residue Lys113 is the N6-AMP-lysine intermediate of the active site. NAD(+) is bound by residues Arg134, Glu168, Lys280, and Lys304. Positions 397, 400, 413, and 419 each coordinate Zn(2+). Residues 577–660 form the BRCT domain; that stretch reads RQESIFSGKT…LDEAAFEALL (84 aa).

It belongs to the NAD-dependent DNA ligase family. LigA subfamily. The cofactor is Mg(2+). Mn(2+) is required as a cofactor.

The enzyme catalyses NAD(+) + (deoxyribonucleotide)n-3'-hydroxyl + 5'-phospho-(deoxyribonucleotide)m = (deoxyribonucleotide)n+m + AMP + beta-nicotinamide D-nucleotide.. Its function is as follows. DNA ligase that catalyzes the formation of phosphodiester linkages between 5'-phosphoryl and 3'-hydroxyl groups in double-stranded DNA using NAD as a coenzyme and as the energy source for the reaction. It is essential for DNA replication and repair of damaged DNA. In Alkaliphilus metalliredigens (strain QYMF), this protein is DNA ligase.